Here is an 852-residue protein sequence, read N- to C-terminus: Metastasis-associated in colon cancer protein 1 (852 aa).

Ser19 carries the post-translational modification Phosphoserine. The ZU5 domain maps to Val212–Ala349. An SH3 domain is found at Asn549 to Lys619.

In terms of assembly, interacts with FASLG. In terms of tissue distribution, preferentially expressed in metastasizing tumors.

It localises to the cytoplasm. It is found in the nucleus. Acts as a transcription activator for MET and as a key regulator of HGF-MET signaling. Promotes cell motility, proliferation and hepatocyte growth factor (HGF)-dependent scattering in vitro and tumor growth and metastasis in vivo. The protein is Metastasis-associated in colon cancer protein 1 (MACC1) of Homo sapiens (Human).